A 267-amino-acid chain; its full sequence is uncharacterized protein (267 aa).

The protein to S.pombe SpAC18G6.12c.

This is an uncharacterized protein from Schizosaccharomyces pombe (strain 972 / ATCC 24843) (Fission yeast).